The primary structure comprises 92 residues: Small ribosomal subunit protein uS15 (92 aa).

It belongs to the universal ribosomal protein uS15 family. In terms of assembly, part of the 30S ribosomal subunit. Forms a bridge to the 50S subunit in the 70S ribosome, contacting the 23S rRNA.

In terms of biological role, one of the primary rRNA binding proteins, it binds directly to 16S rRNA where it helps nucleate assembly of the platform of the 30S subunit by binding and bridging several RNA helices of the 16S rRNA. Forms an intersubunit bridge (bridge B4) with the 23S rRNA of the 50S subunit in the ribosome. In Symbiobacterium thermophilum (strain DSM 24528 / JCM 14929 / IAM 14863 / T), this protein is Small ribosomal subunit protein uS15.